Consider the following 72-residue polypeptide: Exodeoxyribonuclease 7 small subunit (72 aa).

Belongs to the XseB family. In terms of assembly, heterooligomer composed of large and small subunits.

Its subcellular location is the cytoplasm. The catalysed reaction is Exonucleolytic cleavage in either 5'- to 3'- or 3'- to 5'-direction to yield nucleoside 5'-phosphates.. Its function is as follows. Bidirectionally degrades single-stranded DNA into large acid-insoluble oligonucleotides, which are then degraded further into small acid-soluble oligonucleotides. The polypeptide is Exodeoxyribonuclease 7 small subunit (Clostridium kluyveri (strain NBRC 12016)).